Reading from the N-terminus, the 92-residue chain is Putative pterin-4-alpha-carbinolamine dehydratase (92 aa).

It belongs to the pterin-4-alpha-carbinolamine dehydratase family.

The catalysed reaction is (4aS,6R)-4a-hydroxy-L-erythro-5,6,7,8-tetrahydrobiopterin = (6R)-L-erythro-6,7-dihydrobiopterin + H2O. The polypeptide is Putative pterin-4-alpha-carbinolamine dehydratase (Cereibacter sphaeroides (strain ATCC 17023 / DSM 158 / JCM 6121 / CCUG 31486 / LMG 2827 / NBRC 12203 / NCIMB 8253 / ATH 2.4.1.) (Rhodobacter sphaeroides)).